A 349-amino-acid chain; its full sequence is Histidinol-phosphate aminotransferase (349 aa).

At K206 the chain carries N6-(pyridoxal phosphate)lysine.

It belongs to the class-II pyridoxal-phosphate-dependent aminotransferase family. Histidinol-phosphate aminotransferase subfamily. As to quaternary structure, homodimer. The cofactor is pyridoxal 5'-phosphate.

The enzyme catalyses L-histidinol phosphate + 2-oxoglutarate = 3-(imidazol-4-yl)-2-oxopropyl phosphate + L-glutamate. The protein operates within amino-acid biosynthesis; L-histidine biosynthesis; L-histidine from 5-phospho-alpha-D-ribose 1-diphosphate: step 7/9. The chain is Histidinol-phosphate aminotransferase from Hydrogenobaculum sp. (strain Y04AAS1).